A 240-amino-acid chain; its full sequence is Adenosine 5'-phosphosulfate reductase (240 aa).

[4Fe-4S] cluster-binding residues include Cys-125, Cys-126, Cys-208, and Cys-211. Cys-234 (nucleophile; cysteine thiosulfonate intermediate) is an active-site residue.

The protein belongs to the PAPS reductase family. CysH subfamily. [4Fe-4S] cluster is required as a cofactor.

It localises to the cytoplasm. It catalyses the reaction [thioredoxin]-disulfide + sulfite + AMP + 2 H(+) = adenosine 5'-phosphosulfate + [thioredoxin]-dithiol. The protein operates within sulfur metabolism; hydrogen sulfide biosynthesis; sulfite from sulfate. In terms of biological role, catalyzes the formation of sulfite from adenosine 5'-phosphosulfate (APS) using thioredoxin as an electron donor. This Oceanobacillus iheyensis (strain DSM 14371 / CIP 107618 / JCM 11309 / KCTC 3954 / HTE831) protein is Adenosine 5'-phosphosulfate reductase.